The following is an 82-amino-acid chain: Small ribosomal subunit protein uS17 (82 aa).

The protein belongs to the universal ribosomal protein uS17 family. As to quaternary structure, part of the 30S ribosomal subunit.

Functionally, one of the primary rRNA binding proteins, it binds specifically to the 5'-end of 16S ribosomal RNA. This is Small ribosomal subunit protein uS17 from Nitrobacter hamburgensis (strain DSM 10229 / NCIMB 13809 / X14).